The chain runs to 601 residues: Putative Lon protease homolog (601 aa).

The Lon proteolytic domain maps to 363–560 (GEIVGQINGL…YQACELLFGR (198 aa)). Active-site residues include Ser455 and Lys498.

This sequence belongs to the peptidase S16 family.

The protein is Putative Lon protease homolog of Haemophilus influenzae (strain ATCC 51907 / DSM 11121 / KW20 / Rd).